Here is a 1179-residue protein sequence, read N- to C-terminus: Protein turtle homolog A (1179 aa).

The signal sequence occupies residues 1-20 (MVWCLGLAVLSLVISQGADG). Over 21–734 (RGKPEVVSVV…TQLPGLLPQP (714 aa)) the chain is Extracellular. Ig-like domains lie at 24-124 (PEVV…DFAN), 136-216 (PQFQ…GSAT), 226-318 (PPVI…AYLT), 322-410 (PAQV…SPVT), and 418-502 (PAFI…TNVY). 5 disulfide bridges follow: Cys41/Cys108, Cys158/Cys206, Cys248/Cys301, Cys344/Cys395, and Cys440/Cys486. N-linked (GlcNAc...) asparagine glycosylation is found at Asn188 and Asn256. Fibronectin type-III domains are found at residues 507-611 (SPHV…TTPA) and 623-718 (PLSP…TSGL). 2 N-linked (GlcNAc...) asparagine glycosylation sites follow: Asn513 and Asn524. The tract at residues 606 to 626 (LPTTPAAPGLPPTEIPPPLSP) is disordered. Pro residues predominate over residues 613–626 (PGLPPTEIPPPLSP). The helical transmembrane segment at 735 to 755 (VLAGVVGGVCFLGVAVLVSIL) threads the bilayer. The Cytoplasmic portion of the chain corresponds to 756–1179 (AGCLLNRRRA…VPHPEQATLL (424 aa)). Disordered stretches follow at residues 767 to 919 (RRRR…PLPG), 940 to 988 (DWPP…VVGA), and 1015 to 1079 (AAPR…KRRN). Positions 785 to 800 (GKSAAPSALGSGSPDS) are enriched in low complexity. A Phosphoserine modification is found at Ser809. Pro residues-rich tracts occupy residues 826 to 836 (TPSPHPDPPSS) and 906 to 919 (VAPPPAAPPSPLPG). The residue at position 972 (Thr972) is a Phosphothreonine. Positions 1177 to 1179 (TLL) match the PDZ-binding motif.

This sequence belongs to the immunoglobulin superfamily. Turtle family. As to quaternary structure, interacts with MAGI2 and SHANK1.

Its subcellular location is the cell membrane. The protein localises to the synapse. Functionally, functions in dendrite outgrowth and synapse maturation. This chain is Protein turtle homolog A (IGSF9), found in Homo sapiens (Human).